Here is a 296-residue protein sequence, read N- to C-terminus: MTPLMVLVLGPTASGKTSLGIALAQQLDCRVLSIDSRQLYAGMDIGTAKPTRDEQQQARHELLNLSTPDQPINLQQFCSHAQTLIEQEQQRGRPALLVGGSGLYLQALSQGLQPPALPPQTGLRQQLQQLGQSCCHQLLSQADPQAAAKIEPNDPVRTQRALEVLYGTGQTISSQQGRCPPACRVLELGLNPSDLKERIEQRTASLYARGLVAETETLSRRYGADLPLLQTIGYGEALAVLAGRLSESEAQALTSRRTWLFAKRQRTWFRNRHQPLWLNTESALEEALEAIAAARS.

10–17 (GPTASGKT) provides a ligand contact to ATP. 12–17 (TASGKT) provides a ligand contact to substrate. Residues 35–38 (DSRQ) are interaction with substrate tRNA.

The protein belongs to the IPP transferase family. In terms of assembly, monomer. Requires Mg(2+) as cofactor.

It catalyses the reaction adenosine(37) in tRNA + dimethylallyl diphosphate = N(6)-dimethylallyladenosine(37) in tRNA + diphosphate. In terms of biological role, catalyzes the transfer of a dimethylallyl group onto the adenine at position 37 in tRNAs that read codons beginning with uridine, leading to the formation of N6-(dimethylallyl)adenosine (i(6)A). The sequence is that of tRNA dimethylallyltransferase from Synechococcus sp. (strain RCC307).